Consider the following 492-residue polypeptide: Bifunctional protein GlmU (492 aa).

The interval 1 to 238 is pyrophosphorylase; the sequence is MRDAAVVILA…AALVAGVNDR (238 aa). UDP-N-acetyl-alpha-D-glucosamine-binding positions include 9–12, Lys-23, Gln-80, and 85–86; these read LAAG and GT. Asp-111 provides a ligand contact to Mg(2+). Residues Gly-148, Glu-163, Asn-178, and Asn-236 each contribute to the UDP-N-acetyl-alpha-D-glucosamine site. Position 236 (Asn-236) interacts with Mg(2+). Residues 239–259 are linker; sequence VQLADLAAVLNRRIVEGHQRA. An N-acetyltransferase region spans residues 260–492; sequence GVTIIDPAST…EDQGPEATGE (233 aa). UDP-N-acetyl-alpha-D-glucosamine-binding residues include Arg-341 and Lys-359. The active-site Proton acceptor is His-371. UDP-N-acetyl-alpha-D-glucosamine is bound by residues Tyr-374 and Asn-385. Acetyl-CoA-binding positions include Ala-388, 394 to 395, Ser-413, and Ala-431; that span reads NY. Over residues 469–483 the composition is skewed to low complexity; that stretch reads EAAAAAGAGAGAAAE. The disordered stretch occupies residues 469–492; it reads EAAAAAGAGAGAAAEDQGPEATGE.

This sequence in the N-terminal section; belongs to the N-acetylglucosamine-1-phosphate uridyltransferase family. The protein in the C-terminal section; belongs to the transferase hexapeptide repeat family. In terms of assembly, homotrimer. Requires Mg(2+) as cofactor.

Its subcellular location is the cytoplasm. It carries out the reaction alpha-D-glucosamine 1-phosphate + acetyl-CoA = N-acetyl-alpha-D-glucosamine 1-phosphate + CoA + H(+). The catalysed reaction is N-acetyl-alpha-D-glucosamine 1-phosphate + UTP + H(+) = UDP-N-acetyl-alpha-D-glucosamine + diphosphate. It participates in nucleotide-sugar biosynthesis; UDP-N-acetyl-alpha-D-glucosamine biosynthesis; N-acetyl-alpha-D-glucosamine 1-phosphate from alpha-D-glucosamine 6-phosphate (route II): step 2/2. The protein operates within nucleotide-sugar biosynthesis; UDP-N-acetyl-alpha-D-glucosamine biosynthesis; UDP-N-acetyl-alpha-D-glucosamine from N-acetyl-alpha-D-glucosamine 1-phosphate: step 1/1. It functions in the pathway bacterial outer membrane biogenesis; LPS lipid A biosynthesis. In terms of biological role, catalyzes the last two sequential reactions in the de novo biosynthetic pathway for UDP-N-acetylglucosamine (UDP-GlcNAc). The C-terminal domain catalyzes the transfer of acetyl group from acetyl coenzyme A to glucosamine-1-phosphate (GlcN-1-P) to produce N-acetylglucosamine-1-phosphate (GlcNAc-1-P), which is converted into UDP-GlcNAc by the transfer of uridine 5-monophosphate (from uridine 5-triphosphate), a reaction catalyzed by the N-terminal domain. The chain is Bifunctional protein GlmU from Mycolicibacterium vanbaalenii (strain DSM 7251 / JCM 13017 / BCRC 16820 / KCTC 9966 / NRRL B-24157 / PYR-1) (Mycobacterium vanbaalenii).